Reading from the N-terminus, the 282-residue chain is Release factor glutamine methyltransferase (282 aa).

S-adenosyl-L-methionine contacts are provided by residues 129–133, aspartate 151, phenylalanine 180, and asparagine 197; that span reads GTGSG. Position 197–200 (197–200) interacts with substrate; that stretch reads NPPY.

It belongs to the protein N5-glutamine methyltransferase family. PrmC subfamily. As to quaternary structure, monomer and homodimer.

The enzyme catalyses L-glutaminyl-[peptide chain release factor] + S-adenosyl-L-methionine = N(5)-methyl-L-glutaminyl-[peptide chain release factor] + S-adenosyl-L-homocysteine + H(+). In terms of biological role, methylates the class 1 translation termination release factors RF1/PrfA and RF2/PrfB on the glutamine residue of the universally conserved GGQ motif. The sequence is that of Release factor glutamine methyltransferase (prmC) from Thermotoga maritima (strain ATCC 43589 / DSM 3109 / JCM 10099 / NBRC 100826 / MSB8).